A 910-amino-acid chain; its full sequence is Dynein axonemal assembly factor 1 homolog (910 aa).

LRR repeat units lie at residues 43-64, 65-86, 87-108, 111-132, and 136-157; these read GLKCLWLECNAISNISGLDHQS, QLRCLYLHNNLIKKIENLQHCK, QLDTLNLSHNHIAKIENCGSDI, VLNTLNISHNYLKSIESLAELR, and FVSVLDISHNRIEDIAIVKVLA. Residues 171–209 enclose the LRRCT domain; that stretch reads PVVNDIPSYRKTLILECKSLTYLDSRPVFDKDRACAEAW. A compositionally biased stretch (basic and acidic residues) spans 217–230; it reads ERKEHQRWKKEEQR. Disordered regions lie at residues 217–275, 297–332, 344–399, 620–642, 662–682, and 855–910; these read ERKE…GDFE, TKGDTQQAQKLAEERKASTNSVDYITGSDSNSDPTL, SRAC…GSIL, EQVPDEVEANDKASDATIDPVDQ, QVEVGPSDPKDATTSKPIPEE, and EELE…QGDH. The segment covering 314-331 has biased composition (polar residues); it reads STNSVDYITGSDSNSDPT. A compositionally biased stretch (low complexity) spans 380–389; that stretch reads SLSDSSSSSS. Residues 620–633 are compositionally biased toward basic and acidic residues; that stretch reads EQVPDEVEANDKAS. Positions 855–865 are enriched in acidic residues; it reads EELEELNEEED. Basic and acidic residues predominate over residues 866–878; the sequence is PALKEAGDFKHDE.

This sequence belongs to the DNAAF1 family.

Its subcellular location is the cell projection. The protein resides in the cilium. Functionally, cilium-specific protein required for cilia structures. This is Dynein axonemal assembly factor 1 homolog from Anopheles gambiae (African malaria mosquito).